A 673-amino-acid polypeptide reads, in one-letter code: Elongation factor G 1 (673 aa).

The 275-residue stretch at 3–277 folds into the tr-type G domain; the sequence is KELRNIGIIA…SIVDYLPSPL (275 aa). GTP is bound by residues 12–19, 76–80, and 130–133; these read AHIDAGKT, DTPGH, and NKMD.

Belongs to the TRAFAC class translation factor GTPase superfamily. Classic translation factor GTPase family. EF-G/EF-2 subfamily.

The protein resides in the cytoplasm. In terms of biological role, catalyzes the GTP-dependent ribosomal translocation step during translation elongation. During this step, the ribosome changes from the pre-translocational (PRE) to the post-translocational (POST) state as the newly formed A-site-bound peptidyl-tRNA and P-site-bound deacylated tRNA move to the P and E sites, respectively. Catalyzes the coordinated movement of the two tRNA molecules, the mRNA and conformational changes in the ribosome. This Syntrophomonas wolfei subsp. wolfei (strain DSM 2245B / Goettingen) protein is Elongation factor G 1.